The following is a 211-amino-acid chain: SAGA-associated factor 11 homolog 2 (211 aa).

An SGF11-type zinc finger spans residues 115-136; that stretch reads CTCPNCDRLVAAARFAPHLEKC. The tract at residues 149–211 is disordered; that stretch reads RRLATKEGSS…GSKKNNGKTF (63 aa). Residues 157 to 166 are compositionally biased toward low complexity; the sequence is SSASTSSTST. The residue at position 187 (serine 187) is a Phosphoserine. Residues 197 to 211 show a composition bias toward low complexity; that stretch reads SSRNNGSKKNNGKTF.

The protein belongs to the SGF11 family. Component of some SAGA transcription coactivator-HAT complexes, at least composed of Ada2b, not/nonstop, Pcaf/Gcn5, Sgf11 and Spt3. Within the SAGA complex, Sgf11, e(y)2, and not/nonstop form an additional subcomplex of SAGA called the DUB module (deubiquitination module). Interacts directly with not/nonstop. Interacts with the AMEX complex component xmas-2. Interacts with Cbp80; important for promoter recruitment of Sgf11 that is not associated with the DUB module.

It is found in the nucleus. The protein resides in the nucleoplasm. Its subcellular location is the cytoplasm. Its function is as follows. Component of the transcription regulatory histone acetylation (HAT) complex SAGA, a multiprotein complex that activates transcription by remodeling chromatin and mediating histone acetylation and deubiquitination. Within the SAGA complex, participates in a subcomplex that specifically deubiquitinates histone H2B. The SAGA complex is recruited to specific gene promoters by activators, where it is required for transcription. Required for nuclear receptor-mediated transactivation. Binds independently on SAGA to promoters in an RNA-dependent manner. Binds to mRNA and is essential for total mRNA export from the nucleus. Required to counteract heterochromatin silencing. Controls the development of neuronal connectivity in visual system by being required for accurate axon targeting in the optic lobe. Required for expression of ecdysone-induced genes such as br/broad. The polypeptide is SAGA-associated factor 11 homolog 2 (Drosophila grimshawi (Hawaiian fruit fly)).